A 107-amino-acid polypeptide reads, in one-letter code: Metallothionein-1 (107 aa).

This sequence belongs to the metallothionein superfamily. Type 7 family.

Its function is as follows. The metallothioneins are involved in the cellular sequestration of toxic metal ions. Binds 12 cadmium ions per molecule. The sequence is that of Metallothionein-1 from Tetrahymena thermophila.